Consider the following 118-residue polypeptide: Basic phospholipase A2 PA-9C (118 aa).

7 disulfide bridges follow: C11–C71, C27–C117, C29–C45, C44–C98, C51–C91, C60–C84, and C78–C89. Y28, G30, and G32 together coordinate Ca(2+). H48 is a catalytic residue. D49 serves as a coordination point for Ca(2+). The active site involves D92.

It belongs to the phospholipase A2 family. Group I subfamily. D49 sub-subfamily. Ca(2+) serves as cofactor. As to expression, expressed by the venom gland.

It is found in the secreted. The enzyme catalyses a 1,2-diacyl-sn-glycero-3-phosphocholine + H2O = a 1-acyl-sn-glycero-3-phosphocholine + a fatty acid + H(+). Functionally, PLA2 catalyzes the calcium-dependent hydrolysis of the 2-acyl groups in 3-sn-phosphoglycerides. The sequence is that of Basic phospholipase A2 PA-9C from Pseudechis australis (Mulga snake).